The following is a 474-amino-acid chain: Glutamate--tRNA ligase (474 aa).

A 'HIGH' region motif is present at residues 11–21; that stretch reads PSPTGFLHIGG. The short motif at 240-244 is the 'KMSKS' region element; that stretch reads KLSKR. K243 contacts ATP.

This sequence belongs to the class-I aminoacyl-tRNA synthetase family. Glutamate--tRNA ligase type 1 subfamily. As to quaternary structure, monomer.

It localises to the cytoplasm. The catalysed reaction is tRNA(Glu) + L-glutamate + ATP = L-glutamyl-tRNA(Glu) + AMP + diphosphate. Functionally, catalyzes the attachment of glutamate to tRNA(Glu) in a two-step reaction: glutamate is first activated by ATP to form Glu-AMP and then transferred to the acceptor end of tRNA(Glu). The chain is Glutamate--tRNA ligase from Nitrobacter hamburgensis (strain DSM 10229 / NCIMB 13809 / X14).